The primary structure comprises 269 residues: Tropinone reductase homolog At2g29320 (269 aa).

Residue 19–43 (LVTGAASGIGYAIVEELAGFGAKIH) coordinates NADP(+). Ser152 serves as a coordination point for substrate. Tyr166 acts as the Proton acceptor in catalysis.

Belongs to the short-chain dehydrogenases/reductases (SDR) family. SDR65C subfamily.

The polypeptide is Tropinone reductase homolog At2g29320 (Arabidopsis thaliana (Mouse-ear cress)).